The primary structure comprises 103 residues: Large ribosomal subunit protein uL24 (103 aa).

This sequence belongs to the universal ribosomal protein uL24 family. Part of the 50S ribosomal subunit.

Its function is as follows. One of two assembly initiator proteins, it binds directly to the 5'-end of the 23S rRNA, where it nucleates assembly of the 50S subunit. Functionally, one of the proteins that surrounds the polypeptide exit tunnel on the outside of the subunit. This Enterococcus faecalis (strain ATCC 700802 / V583) protein is Large ribosomal subunit protein uL24.